The following is a 382-amino-acid chain: Deoxyhypusine synthase (382 aa).

NAD(+) contacts are provided by residues 108–112 (SNLIS), 134–136 (TAG), Glu140, and Asp257. Residue 139–140 (EE) participates in spermidine binding. A spermidine-binding site is contributed by Asp262. An NAD(+)-binding site is contributed by Gly304. His309 contributes to the spermidine binding site. 329–330 (TG) serves as a coordination point for NAD(+). Residues 335-337 (GSD) and 344-350 (EAVSWGK) each bind spermidine. The active-site Nucleophile is the Lys350. 363–364 (DV) provides a ligand contact to NAD(+).

Belongs to the deoxyhypusine synthase family. The cofactor is NAD(+).

It carries out the reaction [eIF5A protein]-L-lysine + spermidine = [eIF5A protein]-deoxyhypusine + propane-1,3-diamine. Its pathway is protein modification; eIF5A hypusination. In terms of biological role, catalyzes the NAD-dependent oxidative cleavage of spermidine and the subsequent transfer of the butylamine moiety of spermidine to the epsilon-amino group of a specific lysine residue of the eIF-5A precursor protein to form the intermediate deoxyhypusine residue. The chain is Deoxyhypusine synthase (DYS1) from Eremothecium gossypii (strain ATCC 10895 / CBS 109.51 / FGSC 9923 / NRRL Y-1056) (Yeast).